The sequence spans 151 residues: Probable transcriptional regulator syrB3 (151 aa).

Positions 1 to 65 (MVDESNAGPV…QERSEKLRLI (65 aa)) are disordered. Over residues 7–23 (AGPVAPAVVADAEVKAP) the composition is skewed to low complexity. The span at 52–65 (GYSEQERSEKLRLI) shows a compositional bias: basic and acidic residues.

Belongs to the SyrB family.

In Rhizobium meliloti (strain 1021) (Ensifer meliloti), this protein is Probable transcriptional regulator syrB3 (syrB3).